The sequence spans 504 residues: Maturase K (504 aa).

The protein belongs to the intron maturase 2 family. MatK subfamily.

The protein localises to the plastid. It is found in the chloroplast. Usually encoded in the trnK tRNA gene intron. Probably assists in splicing its own and other chloroplast group II introns. The polypeptide is Maturase K (Arabidopsis thaliana (Mouse-ear cress)).